Here is a 317-residue protein sequence, read N- to C-terminus: Large ribosomal subunit protein uL10z (317 aa).

Belongs to the universal ribosomal protein uL10 family. P0 forms a pentameric complex by interaction with dimers of P1 and P2. In terms of processing, phosphorylated.

Its function is as follows. Ribosomal protein P0 is the functional equivalent of E.coli protein L10. This chain is Large ribosomal subunit protein uL10z (RPP0A), found in Arabidopsis thaliana (Mouse-ear cress).